A 436-amino-acid polypeptide reads, in one-letter code: 3-ketoacyl-CoA thiolase (436 aa).

Cysteine 99 (acyl-thioester intermediate) is an active-site residue. Catalysis depends on proton acceptor residues histidine 392 and cysteine 422.

Belongs to the thiolase-like superfamily. Thiolase family. Heterotetramer of two alpha chains (FadJ) and two beta chains (FadI).

Its subcellular location is the cytoplasm. It carries out the reaction an acyl-CoA + acetyl-CoA = a 3-oxoacyl-CoA + CoA. It functions in the pathway lipid metabolism; fatty acid beta-oxidation. Functionally, catalyzes the final step of fatty acid oxidation in which acetyl-CoA is released and the CoA ester of a fatty acid two carbons shorter is formed. The polypeptide is 3-ketoacyl-CoA thiolase (Yersinia enterocolitica serotype O:8 / biotype 1B (strain NCTC 13174 / 8081)).